A 648-amino-acid polypeptide reads, in one-letter code: MFALDSIVGKHINYALDKTQHLPNKIMNNITNTEITLQDYQYFVSRIFIGLKNLNSMLLFWDTGMGKTLTAVYIIKYIKELFPRWIILIFIKKSLYIDPWLNTIRSYISDTSNIKFIYYDSSSSLDKFNNIYRSIESSLNKKSRLLIIIDEVHKLISRTVKKDNNERNFTPIYKKLIKLANFENNKILCMSATPVTNNISEFNNLIGLLRPNVMNIKEEYINNGKLINFKELRETLLAICSYKRLIEADSLTETNYIDGYAKKNIFYHNIIMSDEQSKLYNMAEKYDYKTELGGLKTMRRLISSFAFYDLKIKGDLDNIEYNDMIKRKLAEFSEFTKNINFSESFIESFKNDNIKIKTNLPITDINNYNILYQYSCKYIETCKIILNSRGKVLIFEPLVNFEGISSLKCYFNCFNISYIEYSSKTLKTRDNELNEYNNYENNNGKKVKVCIFSYAGSEGISFKCINDIIILDMPWNESELKQIIGRSIRLNSHKDLPQEYRYVNVHFLISYTNNRKSVDKEILDIIKDKQGKINVIFDLLKSSSIESIHNTYKYIEPAENEIIFDTIRKTRMKEMNVSNVIINIKLYPISYCKDYDRATILKGLLNKDTNIVYKDNTAVAKLMIDKDNIPIFIIENDTLIYIADDYYE.

Residues 48–212 (FIGLKNLNSM…NNLIGLLRPN (165 aa)) enclose the Helicase ATP-binding domain. 61–68 (WDTGMGKT) contributes to the ATP binding site. The short motif at 150–153 (DEVH) is the DEXH box element. One can recognise a Helicase C-terminal domain in the interval 378-541 (YIETCKIILN…KINVIFDLLK (164 aa)). The segment at 467 to 533 (DIIILDMPWN…DIIKDKQGKI (67 aa)) is binding to the cap-specific mRNA (nucleoside-2'-O-)-methyltransferase.

This sequence belongs to the helicase family. NPH I subfamily. In terms of assembly, monomer. Interacts (via C-terminus) with RAP94 (via N-terminus). Interacts with the cap-specific mRNA (nucleoside-2'-O-)-methyltransferase.

It localises to the virion. The catalysed reaction is a ribonucleoside 5'-triphosphate + H2O = a ribonucleoside 5'-diphosphate + phosphate + H(+). Functionally, DNA-dependent ATPase required for providing the needed energy to achieve the termination of early transcripts. Acts in concert with the RAP94 subunit of the virion RNA polymerase and the capping enzyme/VTF to catalyze release of UUUUUNU-containing nascent RNA from the elongation complex. NPH-I must bind ssDNA in order to exhibit ATPase activity. This Amsacta (AmEPV) protein is Nucleoside triphosphatase I (NPH1).